The primary structure comprises 285 residues: Tropomyosin alpha-3 chain (285 aa).

A coiled-coil region spans residues 1 to 285; sequence MMEAIKKKMQ…DHALNDMTSI (285 aa). The residue at position 2 (Met-2) is an N-acetylmethionine. The residue at position 2 (Met-2) is an N-acetylalanine. Position 54 is a phosphothreonine (Thr-54). 2 positions are modified to phosphoserine: Ser-62 and Ser-88. Residue Thr-109 is modified to Phosphothreonine. Phosphoserine is present on residues Ser-207 and Ser-216. An N6-acetyllysine modification is found at Ile-228. Phosphothreonine is present on Thr-253. Position 262 is a phosphotyrosine (Tyr-262). Position 272 is a phosphoserine (Ser-272). Thr-283 carries the phosphothreonine modification. Ser-284 carries the phosphoserine modification.

The protein belongs to the tropomyosin family. As to quaternary structure, homodimer. Heterodimer of an alpha (TPM1, TPM3 or TPM4) and a beta (TPM2) chain. Interacts with TMOD1. Interacts with TNNT1.

It localises to the cytoplasm. The protein localises to the cytoskeleton. Functionally, binds to actin filaments in muscle and non-muscle cells. Plays a central role, in association with the troponin complex, in the calcium dependent regulation of vertebrate striated muscle contraction. Smooth muscle contraction is regulated by interaction with caldesmon. In non-muscle cells is implicated in stabilizing cytoskeleton actin filaments. The protein is Tropomyosin alpha-3 chain (Tpm3) of Mus musculus (Mouse).